The chain runs to 617 residues: V-type proton ATPase catalytic subunit A (617 aa).

Position 250–257 (250–257 (GAFGCGKT)) interacts with ATP. Ser-384 is subject to Phosphoserine; by AMPK.

It belongs to the ATPase alpha/beta chains family. As to quaternary structure, V-ATPase is a heteromultimeric enzyme made up of two complexes: the ATP-hydrolytic V1 complex and the proton translocation V0 complex. The V1 complex consists of three catalytic AB heterodimers that form a heterohexamer, three peripheral stalks each consisting of EG heterodimers, one central rotor including subunits D and F, and the regulatory subunits C and H. The proton translocation complex V0 consists of the proton transport subunit a, a ring of proteolipid subunits c9c'', rotary subunit d, subunits e and f, and the accessory subunits ATP6AP1/Ac45 and ATP6AP2/PRR. Interacts with the V0 complex V-ATPase subunit a4 ATP6V0A4. Interacts with WFS1. Interacts with alpha-crystallin B chain/CRYAB and with MTOR, forming a ternary complex. Post-translationally, phosphorylation at Ser-384 by AMPK down-regulates its enzyme activity.

The protein localises to the cytoplasm. The protein resides in the cytosol. It is found in the cytoplasmic vesicle. Its subcellular location is the secretory vesicle. It localises to the clathrin-coated vesicle membrane. The protein localises to the lysosome. It catalyses the reaction ATP + H2O + 4 H(+)(in) = ADP + phosphate + 5 H(+)(out). ATP hydrolysis occurs at the interface between the nucleotide-binding domains of subunits A and B. ATP hydrolysis triggers a conformational change in the subunits D and F, which induces a shift of subunit d. The c-ring is subsequently rotated and results in a continuous proton translocation across the membrane. In terms of biological role, catalytic subunit of the V1 complex of vacuolar(H+)-ATPase (V-ATPase), a multisubunit enzyme composed of a peripheral complex (V1) that hydrolyzes ATP and a membrane integral complex (V0) that translocates protons. V-ATPase is responsible for acidifying and maintaining the pH of intracellular compartments and in some cell types, is targeted to the plasma membrane, where it is responsible for acidifying the extracellular environment. In aerobic conditions, involved in intracellular iron homeostasis, thus triggering the activity of Fe(2+) prolyl hydroxylase (PHD) enzymes, and leading to HIF1A hydroxylation and subsequent proteasomal degradation. May play a role in neurite development and synaptic connectivity. The sequence is that of V-type proton ATPase catalytic subunit A (Atp6v1a) from Mus musculus (Mouse).